The chain runs to 456 residues: Histidine--tRNA ligase (456 aa).

This sequence belongs to the class-II aminoacyl-tRNA synthetase family. As to quaternary structure, homodimer.

Its subcellular location is the cytoplasm. It catalyses the reaction tRNA(His) + L-histidine + ATP = L-histidyl-tRNA(His) + AMP + diphosphate + H(+). The protein is Histidine--tRNA ligase of Christiangramia forsetii (strain DSM 17595 / CGMCC 1.15422 / KT0803) (Gramella forsetii).